Reading from the N-terminus, the 98-residue chain is Post-transcriptional regulator ComN (98 aa).

As to quaternary structure, interacts directly with DivIVA.

The protein resides in the cytoplasm. Its function is as follows. Required for post-transcription initiation control of the comE operon. Promotes the accumulation of its target comE mRNA to septal and polar sites. This chain is Post-transcriptional regulator ComN (comN), found in Bacillus subtilis (strain 168).